Here is a 366-residue protein sequence, read N- to C-terminus: Elongation factor Ts, mitochondrial (366 aa).

The N-terminal 50 residues, 1 to 50 (MAWSQSARKPMIGLLFRAQQHSARGYSYSAFQAHLSSSNVDQSATLLRRF), are a transit peptide targeting the mitochondrion.

This sequence belongs to the EF-Ts family.

It localises to the mitochondrion. Associates with the EF-Tu.GDP complex and induces the exchange of GDP to GTP. It remains bound to the aminoacyl-tRNA.EF-Tu.GTP complex up to the GTP hydrolysis stage on the ribosome. This Oryza sativa subsp. japonica (Rice) protein is Elongation factor Ts, mitochondrial.